Reading from the N-terminus, the 225-residue chain is Red fluorescent protein drFP583 (225 aa).

The 2-iminomethyl-5-imidazolinone (Gln-Gly) cross-link spans Gln-66 to Gly-68. (Z)-2,3-didehydrotyrosine is present on Tyr-67.

Belongs to the GFP family. Homotetramer. Contains a chromophore consisting of modified amino acid residues. The chromophore is formed by autocatalytic backbone condensation between Xaa-N and Gly-(N+2), oxidation of Tyr-(N+1) to didehydrotyrosine, and formation of a double bond to the alpha-amino nitrogen of residue Xaa-N. Maturation of the chromophore requires nothing other than molecular oxygen.

Its function is as follows. Thought to play a role in photoprotection of the coral's resident symbiont microalgae's photosystems from photoinhibition caused by high light levels found near the surface of coral reefs. In deeper water, the fluorescence may be to convert blue light into longer wavelengths more suitable for use in photosynthesis by the microalgal symbionts. In Discosoma sp. (Sea anemone), this protein is Red fluorescent protein drFP583.